The following is a 233-amino-acid chain: Lectin (233 aa).

N-linked (GlcNAc...) asparagine glycans are attached at residues Asn-26 and Asn-108. 2 residues coordinate Mn(2+): Glu-118 and Asp-120. Ca(2+)-binding residues include Asp-120, Trp-122, Asn-124, and Glu-129. Positions 129 and 134 each coordinate Mn(2+).

It belongs to the leguminous lectin family. In terms of assembly, monomer.

The protein resides in the secreted. Has metal-independent hemagglutinating activity towards erythrocytes from rabbit and human. Hemagglutinating activity is inhibited by glycoproteins fetuin, asialo-fetuin, thyroglobulin and azocasein but not by free carbohydrates. Inhibits ADP- and epinephrin-induced but not collagen-, fibrinogen, thrombin- or arachidonic acid-induced platelet aggregation in vitro. Has anticoagulant activity in vitro. The protein is Lectin of Bauhinia forficata (Brazilian orchid-tree).